The sequence spans 229 residues: Extracellular small neutral protease (229 aa).

A signal peptide spans 1–28; that stretch reads MRMPLSVLTAAGLSLATLGLGTAGPASA. Residues 29 to 81 constitute a propeptide that is removed on maturation; the sequence is TPTAEGAPVVAYDGSPSAGSPADAKAEAAANRAFFEAVLRSVAEKRAANPKST. Ca(2+) contacts are provided by D159 and T161. A Zn(2+)-binding site is contributed by H166. E167 is an active-site residue. Positions 170 and 176 each coordinate Zn(2+). C182 and C195 form a disulfide bridge.

This sequence belongs to the peptidase M7 family. In terms of assembly, monomer. Requires Ca(2+) as cofactor. Zn(2+) is required as a cofactor.

The protein resides in the secreted. It catalyses the reaction Hydrolyzes proteins with a preference for Tyr or Phe in the P1' position. Has no action on amino-acid p-nitroanilides.. Milk hydrolyzing. In Streptomyces sp. (strain C5), this protein is Extracellular small neutral protease (snpA).